A 185-amino-acid polypeptide reads, in one-letter code: Ribosome-recycling factor (185 aa).

This sequence belongs to the RRF family.

It is found in the cytoplasm. Functionally, responsible for the release of ribosomes from messenger RNA at the termination of protein biosynthesis. May increase the efficiency of translation by recycling ribosomes from one round of translation to another. The protein is Ribosome-recycling factor of Hydrogenovibrio crunogenus (strain DSM 25203 / XCL-2) (Thiomicrospira crunogena).